A 492-amino-acid polypeptide reads, in one-letter code: Transcript termination protein A18 (492 aa).

The 157-residue stretch at 100–256 (MIELKRPLYI…NSIINIAKLS (157 aa)) folds into the Helicase ATP-binding domain. 113–120 (LACGFGKT) lines the ATP pocket. The DESH box motif lies at 206–209 (DESH).

This sequence belongs to the helicase family. Poxviruses subfamily. In terms of assembly, interacts with G2. Might be part of a transcription complex composed at least of G2, A18, and H5.

Its subcellular location is the virion. In terms of biological role, DNA helicase which seems to act as a postreplicative transcription termination factor. Involved in ATP-dependent release of nascent RNA. Forms a stable complex with single-stranded DNA, and to a lesser extent RNA. This Bos taurus (Bovine) protein is Transcript termination protein A18.